We begin with the raw amino-acid sequence, 344 residues long: GTP 3',8-cyclase (344 aa).

The region spanning 19–245 (PFGRAVTYLR…DIPYRTGGPA (227 aa)) is the Radical SAM core domain. Residue Arg28 participates in GTP binding. 2 residues coordinate [4Fe-4S] cluster: Cys35 and Cys39. Tyr41 contacts S-adenosyl-L-methionine. Cys42 contacts [4Fe-4S] cluster. A GTP-binding site is contributed by Arg77. Gly81 contacts S-adenosyl-L-methionine. Residue Thr111 participates in GTP binding. Ser135 provides a ligand contact to S-adenosyl-L-methionine. Lys171 contributes to the GTP binding site. Met205 is an S-adenosyl-L-methionine binding site. 2 residues coordinate [4Fe-4S] cluster: Cys268 and Cys271. Residue 273–275 (RVR) coordinates GTP. Cys285 contacts [4Fe-4S] cluster.

Belongs to the radical SAM superfamily. MoaA family. In terms of assembly, monomer and homodimer. [4Fe-4S] cluster serves as cofactor.

It catalyses the reaction GTP + AH2 + S-adenosyl-L-methionine = (8S)-3',8-cyclo-7,8-dihydroguanosine 5'-triphosphate + 5'-deoxyadenosine + L-methionine + A + H(+). It participates in cofactor biosynthesis; molybdopterin biosynthesis. Its function is as follows. Catalyzes the cyclization of GTP to (8S)-3',8-cyclo-7,8-dihydroguanosine 5'-triphosphate. This Brucella melitensis biotype 2 (strain ATCC 23457) protein is GTP 3',8-cyclase.